Here is a 425-residue protein sequence, read N- to C-terminus: Probable isoprenylcysteine alpha-carbonyl methylesterase ICMEL1 (425 aa).

Residues 1 to 10 (MQVELADRAA) are compositionally biased toward basic and acidic residues. A disordered region spans residues 1-42 (MQVELADRAAARPSETGEAPPSSPAAAAAASAAAEDAPLLPG). A compositionally biased stretch (low complexity) spans 24 to 34 (PAAAAAASAAA). Transmembrane regions (helical) follow at residues 99-119 (FLAL…VVYY) and 154-174 (VVAF…GALL). Residues 160–162 (GGA) and 231–233 (QSA) each bind substrate. Residues serine 232, aspartate 334, and histidine 366 contribute to the active site.

The protein belongs to the AB hydrolase superfamily. Isoprenylcysteine methylesterase family.

The protein localises to the endoplasmic reticulum membrane. It is found in the golgi apparatus membrane. The enzyme catalyses [protein]-C-terminal S-[(2E,6E)-farnesyl]-L-cysteine methyl ester + H2O = [protein]-C-terminal S-[(2E,6E)-farnesyl]-L-cysteine + methanol + H(+). Its function is as follows. Catalyzes the demethylation of isoprenylcysteine methylesters. The protein is Probable isoprenylcysteine alpha-carbonyl methylesterase ICMEL1 (IMCEL1) of Oryza sativa subsp. japonica (Rice).